A 187-amino-acid polypeptide reads, in one-letter code: Transmembrane protein 212 (187 aa).

The next 5 membrane-spanning stretches (helical) occupy residues Thr11–Phe31, Val42–Leu62, Ala76–Leu96, Phe106–Phe126, and Leu148–Ile168.

The protein resides in the membrane. In Mus musculus (Mouse), this protein is Transmembrane protein 212 (Tmem212).